A 146-amino-acid polypeptide reads, in one-letter code: Large ribosomal subunit protein uL13 (146 aa).

Residues 125–146 (YAGPKHPHAAQQPKVYEPRPRG) form a disordered region.

Belongs to the universal ribosomal protein uL13 family. As to quaternary structure, part of the 50S ribosomal subunit.

In terms of biological role, this protein is one of the early assembly proteins of the 50S ribosomal subunit, although it is not seen to bind rRNA by itself. It is important during the early stages of 50S assembly. This Roseiflexus sp. (strain RS-1) protein is Large ribosomal subunit protein uL13.